Here is a 401-residue protein sequence, read N- to C-terminus: Acetate kinase (401 aa).

A Mg(2+)-binding site is contributed by asparagine 9. Lysine 16 is an ATP binding site. Arginine 88 lines the substrate pocket. Aspartate 147 (proton donor/acceptor) is an active-site residue. Residues 207–211, 282–284, and 333–337 contribute to the ATP site; these read HLGNG, DCR, and GIGEN. Position 388 (glutamate 388) interacts with Mg(2+).

Belongs to the acetokinase family. As to quaternary structure, homodimer. Requires Mg(2+) as cofactor. Mn(2+) is required as a cofactor.

Its subcellular location is the cytoplasm. It catalyses the reaction acetate + ATP = acetyl phosphate + ADP. It functions in the pathway metabolic intermediate biosynthesis; acetyl-CoA biosynthesis; acetyl-CoA from acetate: step 1/2. Functionally, catalyzes the formation of acetyl phosphate from acetate and ATP. Can also catalyze the reverse reaction. This chain is Acetate kinase, found in Haemophilus influenzae (strain ATCC 51907 / DSM 11121 / KW20 / Rd).